The chain runs to 355 residues: Peptide chain release factor 1 (355 aa).

N5-methylglutamine is present on Gln-233.

The protein belongs to the prokaryotic/mitochondrial release factor family. Methylated by PrmC. Methylation increases the termination efficiency of RF1.

Its subcellular location is the cytoplasm. Functionally, peptide chain release factor 1 directs the termination of translation in response to the peptide chain termination codons UAG and UAA. This Bacillus anthracis protein is Peptide chain release factor 1.